We begin with the raw amino-acid sequence, 100 residues long: NADH-quinone oxidoreductase subunit K 2 (100 aa).

A run of 3 helical transmembrane segments spans residues 2–22 (LAIE…TIGV), 29–49 (IVIF…FIAF), and 61–81 (FVFF…ALMI).

It belongs to the complex I subunit 4L family. As to quaternary structure, NDH-1 is composed of 14 different subunits. Subunits NuoA, H, J, K, L, M, N constitute the membrane sector of the complex.

Its subcellular location is the cell inner membrane. It carries out the reaction a quinone + NADH + 5 H(+)(in) = a quinol + NAD(+) + 4 H(+)(out). NDH-1 shuttles electrons from NADH, via FMN and iron-sulfur (Fe-S) centers, to quinones in the respiratory chain. The immediate electron acceptor for the enzyme in this species is believed to be ubiquinone. Couples the redox reaction to proton translocation (for every two electrons transferred, four hydrogen ions are translocated across the cytoplasmic membrane), and thus conserves the redox energy in a proton gradient. The polypeptide is NADH-quinone oxidoreductase subunit K 2 (Citrifermentans bemidjiense (strain ATCC BAA-1014 / DSM 16622 / JCM 12645 / Bem) (Geobacter bemidjiensis)).